The primary structure comprises 346 residues: D-alanine--D-alanine ligase (346 aa).

The 195-residue stretch at 133 to 327 folds into the ATP-grasp domain; it reads KLYAKSVGVK…ALADQISLEK (195 aa). Residue 159–211 participates in ATP binding; the sequence is LSFPCIIKPARLGSSIGISIVKDEKDLEYAKDVGFEFDNDLVVEEFKNNIKEY. The Mg(2+) site is built by aspartate 284, glutamate 296, and asparagine 298.

The protein belongs to the D-alanine--D-alanine ligase family. The cofactor is Mg(2+). Requires Mn(2+) as cofactor.

Its subcellular location is the cytoplasm. The enzyme catalyses 2 D-alanine + ATP = D-alanyl-D-alanine + ADP + phosphate + H(+). It functions in the pathway cell wall biogenesis; peptidoglycan biosynthesis. In terms of biological role, cell wall formation. This Campylobacter jejuni subsp. jejuni serotype O:23/36 (strain 81-176) protein is D-alanine--D-alanine ligase.